Consider the following 268-residue polypeptide: Shikimate dehydrogenase (NADP(+)) (268 aa).

Shikimate-binding positions include 13-15 (SLS) and T60. K64 (proton acceptor) is an active-site residue. E76 contributes to the NADP(+) binding site. Shikimate contacts are provided by N85 and D100. Residues 124 to 128 (GAGGA), 148 to 153 (NRTMAR), and I209 contribute to the NADP(+) site. Y211 provides a ligand contact to shikimate. G232 is a binding site for NADP(+).

This sequence belongs to the shikimate dehydrogenase family. In terms of assembly, homodimer.

The enzyme catalyses shikimate + NADP(+) = 3-dehydroshikimate + NADPH + H(+). It functions in the pathway metabolic intermediate biosynthesis; chorismate biosynthesis; chorismate from D-erythrose 4-phosphate and phosphoenolpyruvate: step 4/7. In terms of biological role, involved in the biosynthesis of the chorismate, which leads to the biosynthesis of aromatic amino acids. Catalyzes the reversible NADPH linked reduction of 3-dehydroshikimate (DHSA) to yield shikimate (SA). This chain is Shikimate dehydrogenase (NADP(+)), found in Staphylococcus aureus (strain USA300).